The primary structure comprises 250 residues: Methylthioribulose-1-phosphate dehydratase (250 aa).

A substrate-binding site is contributed by C103. Residues H121 and H123 each contribute to the Zn(2+) site. E146 acts as the Proton donor/acceptor in catalysis. H211 serves as a coordination point for Zn(2+).

Belongs to the aldolase class II family. MtnB subfamily. Requires Zn(2+) as cofactor.

Its subcellular location is the cytoplasm. It carries out the reaction 5-(methylsulfanyl)-D-ribulose 1-phosphate = 5-methylsulfanyl-2,3-dioxopentyl phosphate + H2O. The protein operates within amino-acid biosynthesis; L-methionine biosynthesis via salvage pathway; L-methionine from S-methyl-5-thio-alpha-D-ribose 1-phosphate: step 2/6. Functionally, catalyzes the dehydration of methylthioribulose-1-phosphate (MTRu-1-P) into 2,3-diketo-5-methylthiopentyl-1-phosphate (DK-MTP-1-P). This Clavispora lusitaniae (strain ATCC 42720) (Yeast) protein is Methylthioribulose-1-phosphate dehydratase.